The primary structure comprises 518 residues: 2-isopropylmalate synthase (518 aa).

One can recognise a Pyruvate carboxyltransferase domain in the interval 5–269 (IIVLDTTLRD…STNVRLKELI (265 aa)). 4 residues coordinate Mn(2+): Asp14, His204, His206, and Asn240. Residues 397-518 (ELDSFQVVTN…HDSQAPVSAR (122 aa)) are regulatory domain.

This sequence belongs to the alpha-IPM synthase/homocitrate synthase family. LeuA type 1 subfamily. In terms of assembly, homodimer. Mn(2+) serves as cofactor.

The protein localises to the cytoplasm. It carries out the reaction 3-methyl-2-oxobutanoate + acetyl-CoA + H2O = (2S)-2-isopropylmalate + CoA + H(+). It participates in amino-acid biosynthesis; L-leucine biosynthesis; L-leucine from 3-methyl-2-oxobutanoate: step 1/4. Its function is as follows. Catalyzes the condensation of the acetyl group of acetyl-CoA with 3-methyl-2-oxobutanoate (2-ketoisovalerate) to form 3-carboxy-3-hydroxy-4-methylpentanoate (2-isopropylmalate). This Geobacillus sp. (strain Y412MC10) protein is 2-isopropylmalate synthase.